The primary structure comprises 78 residues: uncharacterized protein (78 aa).

The disordered stretch occupies residues 51-78 (GGKWDGGGSGGKWNGGGGSGGGSWKKWN).

This is an uncharacterized protein from Dictyostelium discoideum (Social amoeba).